We begin with the raw amino-acid sequence, 430 residues long: Gamma-glutamyl phosphate reductase (430 aa).

It belongs to the gamma-glutamyl phosphate reductase family.

The protein resides in the cytoplasm. The enzyme catalyses L-glutamate 5-semialdehyde + phosphate + NADP(+) = L-glutamyl 5-phosphate + NADPH + H(+). It functions in the pathway amino-acid biosynthesis; L-proline biosynthesis; L-glutamate 5-semialdehyde from L-glutamate: step 2/2. Functionally, catalyzes the NADPH-dependent reduction of L-glutamate 5-phosphate into L-glutamate 5-semialdehyde and phosphate. The product spontaneously undergoes cyclization to form 1-pyrroline-5-carboxylate. The polypeptide is Gamma-glutamyl phosphate reductase (Rhodopseudomonas palustris (strain BisB5)).